Here is a 244-residue protein sequence, read N- to C-terminus: Probable phosphatase NT01CX_1282 (244 aa).

Zn(2+) contacts are provided by H8, H10, H16, H41, E74, H102, H132, D193, and H195.

Belongs to the PHP family. Zn(2+) serves as cofactor.

This Clostridium novyi (strain NT) protein is Probable phosphatase NT01CX_1282.